The following is a 441-amino-acid chain: Ribulose bisphosphate carboxylase large chain (441 aa).

Substrate contacts are provided by Asn89 and Thr139. Lys141 acts as the Proton acceptor in catalysis. Lys143 contributes to the substrate binding site. Lys167, Asp169, and Glu170 together coordinate Mg(2+). An N6-carboxylysine modification is found at Lys167. Residue His260 is the Proton acceptor of the active site. Xaa261 and Ser345 together coordinate substrate.

The protein belongs to the RuBisCO large chain family. Type I subfamily. In terms of assembly, heterohexadecamer of 8 large chains and 8 small chains; disulfide-linked. The disulfide link is formed within the large subunit homodimers. The cofactor is Mg(2+). In terms of processing, the disulfide bond which can form in the large chain dimeric partners within the hexadecamer appears to be associated with oxidative stress and protein turnover.

It is found in the plastid. The protein resides in the chloroplast. It carries out the reaction 2 (2R)-3-phosphoglycerate + 2 H(+) = D-ribulose 1,5-bisphosphate + CO2 + H2O. The enzyme catalyses D-ribulose 1,5-bisphosphate + O2 = 2-phosphoglycolate + (2R)-3-phosphoglycerate + 2 H(+). In terms of biological role, ruBisCO catalyzes two reactions: the carboxylation of D-ribulose 1,5-bisphosphate, the primary event in carbon dioxide fixation, as well as the oxidative fragmentation of the pentose substrate in the photorespiration process. Both reactions occur simultaneously and in competition at the same active site. This chain is Ribulose bisphosphate carboxylase large chain, found in Asclepias exaltata (Poke milkweed).